The following is a 282-amino-acid chain: Small ribosomal subunit protein uS3 (282 aa).

Residues isoleucine 43–lysine 111 form the KH type-2 domain. Residues glutamine 218 to alanine 282 are disordered. The segment covering proline 230–glutamate 262 has biased composition (basic and acidic residues). Low complexity predominate over residues asparagine 263–alanine 276.

Belongs to the universal ribosomal protein uS3 family. As to quaternary structure, part of the 30S ribosomal subunit. Forms a tight complex with proteins S10 and S14.

Functionally, binds the lower part of the 30S subunit head. Binds mRNA in the 70S ribosome, positioning it for translation. The sequence is that of Small ribosomal subunit protein uS3 from Renibacterium salmoninarum (strain ATCC 33209 / DSM 20767 / JCM 11484 / NBRC 15589 / NCIMB 2235).